The primary structure comprises 1072 residues: RIMS-binding protein 2 (1072 aa).

The SH3 1 domain occupies 181 to 248; it reads GKVHLCVARY…PSNFVDFIQD (68 aa). 3 Fibronectin type-III domains span residues 311-404, 407-489, and 503-604; these read VPYP…GKDV, APSQ…KKEA, and PPQD…VPPA. 2 disordered regions span residues 597–681 and 713–800; these read PDLL…APVS and SAGQ…TSHN. The span at 599–615 shows a compositional bias: pro residues; the sequence is LLVPPAPHPRTAPPPKP. A compositionally biased stretch (basic and acidic residues) spans 620 to 635; the sequence is MDTKDQHLGPHVKVDE. Positions 660–670 are enriched in low complexity; it reads GPGRRSPSPSR. 2 positions are modified to phosphoserine: Ser720 and Ser728. Basic and acidic residues-rich tracts occupy residues 730-743 and 754-765; these read EVKR…DFLK and CHGDEYHTESSR. Residues 771 to 781 show a composition bias toward acidic residues; it reads DIMEEDEEELY. Phosphoserine is present on residues Ser852 and Ser859. Phosphothreonine is present on Thr861. SH3 domains lie at 868 to 936 and 972 to 1039; these read LPAR…EIHA and VPTR…EVPD. A disordered region spans residues 1044–1072; it reads HLSDAPPHYSHDPPMRSKAKRKKSVHFTP. Residues 1060-1072 are compositionally biased toward basic residues; it reads SKAKRKKSVHFTP.

This sequence belongs to the RIMBP family. As to quaternary structure, interacts with RIMS1, RIMS2, CACNA1D and CACNA1B, and potentially with other Ca(2+) channel alpha-1 isoforms.

The protein resides in the cell membrane. The protein localises to the synapse. Its function is as follows. Plays a role in the synaptic transmission as bifunctional linker that interacts simultaneously with RIMS1, RIMS2, CACNA1D and CACNA1B. In Mus musculus (Mouse), this protein is RIMS-binding protein 2 (Rimbp2).